Reading from the N-terminus, the 413-residue chain is Aspartate aminotransferase, cytoplasmic (413 aa).

G39 and W141 together coordinate L-aspartate. S149 carries the post-translational modification Phosphoserine. L-aspartate is bound at residue N195. N6-(pyridoxal phosphate)lysine is present on K259. R387 contributes to the L-aspartate binding site.

It belongs to the class-I pyridoxal-phosphate-dependent aminotransferase family. In terms of assembly, homodimer. It depends on pyridoxal 5'-phosphate as a cofactor.

Its subcellular location is the cytoplasm. The catalysed reaction is L-aspartate + 2-oxoglutarate = oxaloacetate + L-glutamate. It catalyses the reaction L-cysteine + 2-oxoglutarate = 2-oxo-3-sulfanylpropanoate + L-glutamate. The enzyme catalyses (2S)-2-aminobutanoate + 2-oxoglutarate = 2-oxobutanoate + L-glutamate. It carries out the reaction 3-sulfino-L-alanine + 2-oxoglutarate = 3-sulfinopyruvate + L-glutamate. Its function is as follows. Biosynthesis of L-glutamate from L-aspartate or L-cysteine. Important regulator of levels of glutamate, the major excitatory neurotransmitter of the vertebrate central nervous system. Acts as a scavenger of glutamate in brain neuroprotection. The aspartate aminotransferase activity is involved in hepatic glucose synthesis during development and in adipocyte glyceroneogenesis. Using L-cysteine as substrate, regulates levels of mercaptopyruvate, an important source of hydrogen sulfide. Mercaptopyruvate is converted into H(2)S via the action of 3-mercaptopyruvate sulfurtransferase (3MST). Hydrogen sulfide is an important synaptic modulator and neuroprotectant in the brain. The polypeptide is Aspartate aminotransferase, cytoplasmic (Macaca fascicularis (Crab-eating macaque)).